The primary structure comprises 294 residues: 4-diphosphocytidyl-2-C-methyl-D-erythritol kinase (294 aa).

Lys16 is a catalytic residue. 99-109 (PMGAGLGGGSS) provides a ligand contact to ATP. Residue Asp141 is part of the active site.

The protein belongs to the GHMP kinase family. IspE subfamily.

It catalyses the reaction 4-CDP-2-C-methyl-D-erythritol + ATP = 4-CDP-2-C-methyl-D-erythritol 2-phosphate + ADP + H(+). It functions in the pathway isoprenoid biosynthesis; isopentenyl diphosphate biosynthesis via DXP pathway; isopentenyl diphosphate from 1-deoxy-D-xylulose 5-phosphate: step 3/6. Functionally, catalyzes the phosphorylation of the position 2 hydroxy group of 4-diphosphocytidyl-2C-methyl-D-erythritol. The chain is 4-diphosphocytidyl-2-C-methyl-D-erythritol kinase from Polynucleobacter asymbioticus (strain DSM 18221 / CIP 109841 / QLW-P1DMWA-1) (Polynucleobacter necessarius subsp. asymbioticus).